A 685-amino-acid polypeptide reads, in one-letter code: Serine/threonine-protein kinase PLK2 (685 aa).

The tract at residues 24 to 71 (KGCGADSKKKRPPQPPEESQPPQSQAQVPPAAAHHHHHHSHSGPEISR) is disordered. Residues 43 to 55 (QPPQSQAQVPPAA) show a composition bias toward low complexity. In terms of domain architecture, Protein kinase spans 82-334 (YCRGKVLGKG…LDDIIRHDFF (253 aa)). ATP is bound by residues 88–96 (LGKGGFAKC) and Lys-111. Asp-205 acts as the Proton acceptor in catalysis. Residue Thr-239 is modified to Phosphothreonine. A disordered region spans residues 406-433 (SITQQPSKHRTDEELQPPTTTVARSGTP). POLO box domains are found at residues 503–581 (WVTK…YMEE) and 601–685 (YLLQ…QRCN).

This sequence belongs to the protein kinase superfamily. Ser/Thr protein kinase family. CDC5/Polo subfamily. In terms of assembly, interacts with NSF; causing NSF dissociation from GRIA2. Interacts with CIB1. In terms of processing, catalytic activity is enhanced by phosphorylation of Thr-239.

It localises to the cytoplasm. The protein localises to the cytoskeleton. Its subcellular location is the microtubule organizing center. The protein resides in the centrosome. It is found in the centriole. It localises to the cell projection. The protein localises to the dendrite. The catalysed reaction is L-seryl-[protein] + ATP = O-phospho-L-seryl-[protein] + ADP + H(+). It carries out the reaction L-threonyl-[protein] + ATP = O-phospho-L-threonyl-[protein] + ADP + H(+). Its activity is regulated as follows. Activated by phosphorylation of Thr-239. Once activated, activity is stimulated by binding target proteins. Its function is as follows. Tumor suppressor serine/threonine-protein kinase involved in synaptic plasticity, centriole duplication and G1/S phase transition. Polo-like kinases act by binding and phosphorylating proteins that are already phosphorylated on a specific motif recognized by the POLO box domains. Phosphorylates CPAP, NPM1, RAPGEF2, RASGRF1, SNCA, SIPA1L1 and SYNGAP1. Plays a key role in synaptic plasticity and memory by regulating the Ras and Rap protein signaling: required for overactivity-dependent spine remodeling by phosphorylating the Ras activator RASGRF1 and the Rap inhibitor SIPA1L1 leading to their degradation by the proteasome. Conversely, phosphorylates the Rap activator RAPGEF2 and the Ras inhibitor SYNGAP1, promoting their activity. Also regulates synaptic plasticity independently of kinase activity, via its interaction with NSF that disrupts the interaction between NSF and the GRIA2 subunit of AMPARs, leading to a rapid rundown of AMPAR-mediated current that occludes long term depression. Required for procentriole formation and centriole duplication by phosphorylating CPAP and NPM1, respectively. Its induction by p53/TP53 suggests that it may participate in the mitotic checkpoint following stress. This Pongo abelii (Sumatran orangutan) protein is Serine/threonine-protein kinase PLK2 (PLK2).